Reading from the N-terminus, the 401-residue chain is Probable tRNA sulfurtransferase (401 aa).

In terms of domain architecture, THUMP spans 60–165 (EAVMARLKHV…EDATYLTFRD (106 aa)). ATP contacts are provided by residues 183 to 184 (MI), 208 to 209 (HF), Arg-265, Gly-287, and Gln-296.

This sequence belongs to the ThiI family.

The protein resides in the cytoplasm. It carries out the reaction [ThiI sulfur-carrier protein]-S-sulfanyl-L-cysteine + a uridine in tRNA + 2 reduced [2Fe-2S]-[ferredoxin] + ATP + H(+) = [ThiI sulfur-carrier protein]-L-cysteine + a 4-thiouridine in tRNA + 2 oxidized [2Fe-2S]-[ferredoxin] + AMP + diphosphate. The enzyme catalyses [ThiS sulfur-carrier protein]-C-terminal Gly-Gly-AMP + S-sulfanyl-L-cysteinyl-[cysteine desulfurase] + AH2 = [ThiS sulfur-carrier protein]-C-terminal-Gly-aminoethanethioate + L-cysteinyl-[cysteine desulfurase] + A + AMP + 2 H(+). It functions in the pathway cofactor biosynthesis; thiamine diphosphate biosynthesis. In terms of biological role, catalyzes the ATP-dependent transfer of a sulfur to tRNA to produce 4-thiouridine in position 8 of tRNAs, which functions as a near-UV photosensor. Also catalyzes the transfer of sulfur to the sulfur carrier protein ThiS, forming ThiS-thiocarboxylate. This is a step in the synthesis of thiazole, in the thiamine biosynthesis pathway. The sulfur is donated as persulfide by IscS. This is Probable tRNA sulfurtransferase from Bacillus licheniformis (strain ATCC 14580 / DSM 13 / JCM 2505 / CCUG 7422 / NBRC 12200 / NCIMB 9375 / NCTC 10341 / NRRL NRS-1264 / Gibson 46).